The following is a 275-amino-acid chain: T cell receptor alpha chain MC.7.G5 (275 aa).

Positions 1–21 are cleaved as a signal peptide; it reads MACPGFLWALVISTCLEFSMA. One can recognise an Ig-like V-type domain in the interval 22–116; that stretch reads QTVTQSQPEM…AAMYFCAYRS (95 aa). The interval 22-116 is t cell receptor alpha variable 38-2DV8; that stretch reads QTVTQSQPEM…AAMYFCAYRS (95 aa). Cys43 and Cys112 form a disulfide bridge. The interval 47–53 is CDR1; that stretch reads TSESDYY. Residues 71–81 form a CDR2 region; it reads QEAYKQQNATE. Asn78 is a glycosylation site (N-linked (GlcNAc...) asparagine). The tract at residues 112–124 is CDR3; sequence CAYRSAVNARLMF. The interval 119-134 is t cell receptor alpha joining 31; that stretch reads NARLMFGDGTQLVVKP. Positions 136 to 275 are t cell receptor alpha constant; it reads IQNPDPAVYQ…LLMTLRLWSS (140 aa). An Ig-like C1-type domain is found at 154–242; that stretch reads KSVCLFTDFD…LVEKSFETDT (89 aa). A disulfide bridge connects residues Cys157 and Cys207. Residues Asn167, Asn201, Asn212, and Asn248 are each glycosylated (N-linked (GlcNAc...) asparagine). A connecting peptide region spans residues 229–250; the sequence is CDVKLVEKSFETDTNLNFQNLS. A helical transmembrane segment spans residues 251-273; the sequence is VIGFRILLLKVAGFNLLMTLRLW. The Cytoplasmic portion of the chain corresponds to 274 to 275; it reads SS.

Disulfide-linked heterodimer with TRBV25-1*01J2S3*01C2*01 beta chain. The alpha-beta TR associates with the transmembrane signaling CD3 coreceptor proteins to form the TR-CD3 (TCR). The assembly of alpha-beta TR heterodimers with CD3 occurs in the endoplasmic reticulum where a single alpha-beta TR heterodimer associates with one CD3D-CD3E heterodimer, one CD3G-CD3E heterodimer and one CD247 homodimer forming a stable octameric structure. CD3D-CD3E and CD3G-CD3E heterodimers preferentially associate with TR alpha and TR beta chains (via TM domain), respectively. The association of the CD247 homodimer is the last step of TCR assembly in the endoplasmic reticulum and is required for transport to the cell surface. As to expression, expressed in MR1-restricted CD8-positive T cells.

Its subcellular location is the cell membrane. Its function is as follows. The alpha chain of TRAV38-2DV8*01J31*01C*01/TRBV25-1*01J2S3*01C2*01 alpha-beta T cell receptor (TR) clonotype that displays pan-cancer cell recognition via the invariant MR1 molecule. On CD8-positive T cell clone MC.7.G5, likely recognizes tumor-specific or -associated metabolite(s) essential for cancer cell survival, triggering killing of many cancer cell types including lung, melanoma, leukemia, colon, breast, prostate, bone and ovarian cancer cells. Mediates cancer cell cytotoxicity in an HLA-independent manner. Has no reactivity to healthy cells, even stressed or infected by bacteria. Antigen recognition initiates TR-CD3 clustering on the cell surface and intracellular activation of LCK that phosphorylates the ITAM motifs of CD3G, CD3D, CD3E and CD247 enabling the recruitment of ZAP70. In turn, ZAP70 phosphorylates LAT, which recruits numerous signaling molecules to form the LAT signalosome. The LAT signalosome propagates signal branching to three major signaling pathways, the calcium, the mitogen-activated protein kinase (MAPK) kinase and the nuclear factor NF-kappa-B (NF-kB) pathways, leading to the mobilization of transcription factors that are critical for gene expression and essential for T cell differentiation into effector/memory T cells. The chain is T cell receptor alpha chain MC.7.G5 from Homo sapiens (Human).